The following is a 455-amino-acid chain: Ribulose bisphosphate carboxylase large chain (455 aa).

Lysine 5 bears the N6,N6,N6-trimethyllysine mark. Substrate is bound by residues asparagine 114 and threonine 164. The Proton acceptor role is filled by lysine 166. Lysine 168 contributes to the substrate binding site. Residues lysine 192, aspartate 194, and glutamate 195 each contribute to the Mg(2+) site. Position 192 is an N6-carboxylysine (lysine 192). Histidine 285 serves as the catalytic Proton acceptor. Substrate-binding residues include arginine 286, histidine 318, and serine 370.

Belongs to the RuBisCO large chain family. Type I subfamily. In terms of assembly, heterohexadecamer of 8 large chains and 8 small chains; disulfide-linked. The disulfide link is formed within the large subunit homodimers. The cofactor is Mg(2+). In terms of processing, the disulfide bond which can form in the large chain dimeric partners within the hexadecamer appears to be associated with oxidative stress and protein turnover.

The protein localises to the plastid. The protein resides in the chloroplast. It catalyses the reaction 2 (2R)-3-phosphoglycerate + 2 H(+) = D-ribulose 1,5-bisphosphate + CO2 + H2O. The enzyme catalyses D-ribulose 1,5-bisphosphate + O2 = 2-phosphoglycolate + (2R)-3-phosphoglycerate + 2 H(+). Its function is as follows. RuBisCO catalyzes two reactions: the carboxylation of D-ribulose 1,5-bisphosphate, the primary event in carbon dioxide fixation, as well as the oxidative fragmentation of the pentose substrate in the photorespiration process. Both reactions occur simultaneously and in competition at the same active site. This chain is Ribulose bisphosphate carboxylase large chain, found in Vachellia farnesiana (Sweet acacia).